Reading from the N-terminus, the 1898-residue chain is Receptor-type tyrosine-protein phosphatase F (1898 aa).

The first 29 residues, 1–29 (MTPEPAPGRTMVPLVPALVMLGLVAGAHG), serve as a signal peptide directing secretion. At 30-1254 (DSKPVFVKVP…QQQEEPELLW (1225 aa)) the chain is on the extracellular side. Ig-like C2-type domains follow at residues 33–123 (PVFV…AKLS), 135–224 (PSID…ANLY), and 232–314 (PRFS…AQVT). A disulfide bridge links C54 with C107. 68 to 77 (KKGKKVSSQR) is a heparin binding site. N117 carries N-linked (GlcNAc...) asparagine glycosylation. A disulfide bond links C156 and C207. N-linked (GlcNAc...) asparagine glycosylation is found at N250 and N295. C253 and C298 are disulfide-bonded. Fibronectin type-III domains lie at 321-411 (PPID…TGEQ), 416-510 (PPRR…TQQG), 514-604 (QPAD…TAQS), 609-706 (PPQK…TDED), 711-810 (PPRK…TTGA), 811-905 (VPGR…PEDV), 909-1001 (FPQN…TMPV), and 1005-1089 (FAKN…TAPD). The interval 399–418 (PPSEAVRARTGEQAPSSPPR) is disordered. The segment at 693-713 (GPESSPVLVRTDEDVPSGPPR) is disordered. N721 is a glycosylation site (N-linked (GlcNAc...) asparagine). N-linked (GlcNAc...) asparagine glycans are attached at residues N941 and N957. Residues 1255 to 1275 (VTGPVLAVILIVLIVIAILLF) form a helical membrane-spanning segment. The Cytoplasmic segment spans residues 1276–1898 (KRKRTHSPSS…YLGSFDHYAT (623 aa)). A Phosphoserine modification is found at S1296. Tyrosine-protein phosphatase domains follow at residues 1343 to 1598 (FSQE…LLEA) and 1630 to 1889 (MELE…ALEY). Substrate is bound by residues D1507, 1539-1545 (CSAGVGR), and Q1583. C1539 (phosphocysteine intermediate) is an active-site residue. Catalysis depends on C1830, which acts as the Phosphocysteine intermediate.

The protein belongs to the protein-tyrosine phosphatase family. Receptor class 2A subfamily. In terms of assembly, interacts with GRIP1. Interacts with PPFIA1, PPFIA2 and PPFIA3. Interacts with INSR.

The protein resides in the membrane. The enzyme catalyses O-phospho-L-tyrosyl-[protein] + H2O = L-tyrosyl-[protein] + phosphate. Its function is as follows. Possible cell adhesion receptor. It possesses an intrinsic protein tyrosine phosphatase activity (PTPase) and dephosphorylates EPHA2 regulating its activity. Functionally, the first PTPase domain has enzymatic activity, while the second one seems to affect the substrate specificity of the first one. The chain is Receptor-type tyrosine-protein phosphatase F (PTPRF) from Bos taurus (Bovine).